The following is a 476-amino-acid chain: ATP synthase subunit beta (476 aa).

Residue 157 to 164 coordinates ATP; that stretch reads GGAGVGKT.

This sequence belongs to the ATPase alpha/beta chains family. In terms of assembly, F-type ATPases have 2 components, CF(1) - the catalytic core - and CF(0) - the membrane proton channel. CF(1) has five subunits: alpha(3), beta(3), gamma(1), delta(1), epsilon(1). CF(0) has three main subunits: a(1), b(2) and c(9-12). The alpha and beta chains form an alternating ring which encloses part of the gamma chain. CF(1) is attached to CF(0) by a central stalk formed by the gamma and epsilon chains, while a peripheral stalk is formed by the delta and b chains.

It is found in the cell membrane. The catalysed reaction is ATP + H2O + 4 H(+)(in) = ADP + phosphate + 5 H(+)(out). Produces ATP from ADP in the presence of a proton gradient across the membrane. The catalytic sites are hosted primarily by the beta subunits. The polypeptide is ATP synthase subunit beta (Mycoplasma genitalium (strain ATCC 33530 / DSM 19775 / NCTC 10195 / G37) (Mycoplasmoides genitalium)).